Consider the following 415-residue polypeptide: Homoserine O-acetyltransferase (415 aa).

The region spanning 47–369 is the AB hydrolase-1 domain; it reads NAVLVCHGLT…HGHDAFLVEP (323 aa). S155 (nucleophile) is an active-site residue. Position 226 (R226) interacts with substrate. Residues D329 and H362 contribute to the active site. D363 is a substrate binding site. Residues 387–415 are disordered; that stretch reads RAVTDTATDGGEPDEEEDFAPVHSSLFSR.

Belongs to the AB hydrolase superfamily. MetX family. In terms of assembly, homodimer.

It is found in the cytoplasm. It catalyses the reaction L-homoserine + acetyl-CoA = O-acetyl-L-homoserine + CoA. It functions in the pathway amino-acid biosynthesis; L-methionine biosynthesis via de novo pathway; O-acetyl-L-homoserine from L-homoserine: step 1/1. Transfers an acetyl group from acetyl-CoA to L-homoserine, forming acetyl-L-homoserine. The protein is Homoserine O-acetyltransferase of Haloferax prahovense (strain DSM 18310 / JCM 13924 / TL6).